The chain runs to 112 residues: Probable insulin-like peptide beta-type 5 (112 aa).

Residues 1 to 19 (MNSVFTIIFVLCALQVAAS) form the signal peptide. Positions 20–58 (FRQSFGPSMSEESASMQLLRELQHNMMESAHRPMPRARR) are cleaved as a propeptide — removed; by convertase egl-3. Cystine bridges form between Cys-68–Cys-97, Cys-80–Cys-110, Cys-84–Cys-111, and Cys-96–Cys-101.

This sequence belongs to the insulin family. In terms of processing, may be processed by serine endoprotease bli-4. In terms of tissue distribution, expressed by ASI and ASJ sensory neurons.

It localises to the secreted. In terms of biological role, probable insulin-like peptide which negatively regulates synapse development at the neuromuscular junctions. Probably acts as a daf-2/InsR agonist ligand to prevent dauer formation under optimal environmental conditions. Acts on AWC sensory neurons to regulate high salt chemotaxis responses. The protein is Probable insulin-like peptide beta-type 5 (ins-6) of Caenorhabditis elegans.